The chain runs to 560 residues: Dihydroxy-acid dehydratase (560 aa).

Cys-50 contributes to the [2Fe-2S] cluster binding site. Asp-82 contributes to the Mg(2+) binding site. [2Fe-2S] cluster is bound at residue Cys-123. Mg(2+) is bound by residues Asp-124 and Lys-125. The residue at position 125 (Lys-125) is an N6-carboxylysine. A [2Fe-2S] cluster-binding site is contributed by Cys-195. Residue Glu-446 participates in Mg(2+) binding. Ser-472 (proton acceptor) is an active-site residue.

This sequence belongs to the IlvD/Edd family. As to quaternary structure, homodimer. [2Fe-2S] cluster is required as a cofactor. Requires Mg(2+) as cofactor.

The enzyme catalyses (2R)-2,3-dihydroxy-3-methylbutanoate = 3-methyl-2-oxobutanoate + H2O. It carries out the reaction (2R,3R)-2,3-dihydroxy-3-methylpentanoate = (S)-3-methyl-2-oxopentanoate + H2O. The protein operates within amino-acid biosynthesis; L-isoleucine biosynthesis; L-isoleucine from 2-oxobutanoate: step 3/4. It participates in amino-acid biosynthesis; L-valine biosynthesis; L-valine from pyruvate: step 3/4. Its function is as follows. Functions in the biosynthesis of branched-chain amino acids. Catalyzes the dehydration of (2R,3R)-2,3-dihydroxy-3-methylpentanoate (2,3-dihydroxy-3-methylvalerate) into 2-oxo-3-methylpentanoate (2-oxo-3-methylvalerate) and of (2R)-2,3-dihydroxy-3-methylbutanoate (2,3-dihydroxyisovalerate) into 2-oxo-3-methylbutanoate (2-oxoisovalerate), the penultimate precursor to L-isoleucine and L-valine, respectively. The polypeptide is Dihydroxy-acid dehydratase (Leptothrix cholodnii (strain ATCC 51168 / LMG 8142 / SP-6) (Leptothrix discophora (strain SP-6))).